Here is a 236-residue protein sequence, read N- to C-terminus: Ubiquinone biosynthesis O-methyltransferase (236 aa).

Arg-39, Gly-59, Asp-80, and Met-124 together coordinate S-adenosyl-L-methionine.

The protein belongs to the methyltransferase superfamily. UbiG/COQ3 family.

The catalysed reaction is a 3-demethylubiquinol + S-adenosyl-L-methionine = a ubiquinol + S-adenosyl-L-homocysteine + H(+). It catalyses the reaction a 3-(all-trans-polyprenyl)benzene-1,2-diol + S-adenosyl-L-methionine = a 2-methoxy-6-(all-trans-polyprenyl)phenol + S-adenosyl-L-homocysteine + H(+). It participates in cofactor biosynthesis; ubiquinone biosynthesis. Its function is as follows. O-methyltransferase that catalyzes the 2 O-methylation steps in the ubiquinone biosynthetic pathway. This is Ubiquinone biosynthesis O-methyltransferase from Pseudoalteromonas translucida (strain TAC 125).